Here is a 400-residue protein sequence, read N- to C-terminus: Probable protein phosphatase 2C 64 (400 aa).

In terms of domain architecture, PPM-type phosphatase spans 47 to 355 (DFSMAVVQAN…DDITVIVVFF (309 aa)). Ser-75 carries the phosphoserine modification. 4 residues coordinate Mn(2+): Asp-86, Gly-87, Asp-287, and Asp-346.

It belongs to the PP2C family. Interacts with SAUR19. Mg(2+) is required as a cofactor. Requires Mn(2+) as cofactor.

The enzyme catalyses O-phospho-L-seryl-[protein] + H2O = L-seryl-[protein] + phosphate. The catalysed reaction is O-phospho-L-threonyl-[protein] + H2O = L-threonyl-[protein] + phosphate. Functionally, dephosphorylates and represses plasma membrane H(+)-ATPases (PM H(+)-ATPases, e.g. AHA1 and AHA2), thus influencing negatively plant growth and fitness. The protein is Probable protein phosphatase 2C 64 of Arabidopsis thaliana (Mouse-ear cress).